We begin with the raw amino-acid sequence, 386 residues long: Succinate--CoA ligase [ADP-forming] subunit beta (386 aa).

In terms of domain architecture, ATP-grasp spans Lys9–Leu244. Residues Lys46, Gly53 to Gly55, Val102, and Glu107 contribute to the ATP site. The Mg(2+) site is built by Asn199 and Asp213. Residues Asn264 and Gly321–Met323 each bind substrate.

This sequence belongs to the succinate/malate CoA ligase beta subunit family. As to quaternary structure, heterotetramer of two alpha and two beta subunits. The cofactor is Mg(2+).

It carries out the reaction succinate + ATP + CoA = succinyl-CoA + ADP + phosphate. It catalyses the reaction GTP + succinate + CoA = succinyl-CoA + GDP + phosphate. The protein operates within carbohydrate metabolism; tricarboxylic acid cycle; succinate from succinyl-CoA (ligase route): step 1/1. Functionally, succinyl-CoA synthetase functions in the citric acid cycle (TCA), coupling the hydrolysis of succinyl-CoA to the synthesis of either ATP or GTP and thus represents the only step of substrate-level phosphorylation in the TCA. The beta subunit provides nucleotide specificity of the enzyme and binds the substrate succinate, while the binding sites for coenzyme A and phosphate are found in the alpha subunit. This chain is Succinate--CoA ligase [ADP-forming] subunit beta, found in Chlamydia muridarum (strain MoPn / Nigg).